A 309-amino-acid polypeptide reads, in one-letter code: Ribonuclease Z (309 aa).

Residues His-63, His-65, Asp-67, His-68, His-141, Asp-208, and His-266 each contribute to the Zn(2+) site. The active-site Proton acceptor is Asp-67.

This sequence belongs to the RNase Z family. In terms of assembly, homodimer. Zn(2+) is required as a cofactor.

It carries out the reaction Endonucleolytic cleavage of RNA, removing extra 3' nucleotides from tRNA precursor, generating 3' termini of tRNAs. A 3'-hydroxy group is left at the tRNA terminus and a 5'-phosphoryl group is left at the trailer molecule.. In terms of biological role, zinc phosphodiesterase, which displays some tRNA 3'-processing endonuclease activity. Probably involved in tRNA maturation, by removing a 3'-trailer from precursor tRNA. This Salinispora arenicola (strain CNS-205) protein is Ribonuclease Z.